Reading from the N-terminus, the 547-residue chain is Chaperonin GroEL (547 aa).

Residues 30–33, lysine 51, 87–91, glycine 415, and aspartate 495 contribute to the ATP site; these read TLGP and DGTTT.

Belongs to the chaperonin (HSP60) family. As to quaternary structure, forms a cylinder of 14 subunits composed of two heptameric rings stacked back-to-back. Interacts with the co-chaperonin GroES.

The protein localises to the cytoplasm. The enzyme catalyses ATP + H2O + a folded polypeptide = ADP + phosphate + an unfolded polypeptide.. Functionally, together with its co-chaperonin GroES, plays an essential role in assisting protein folding. The GroEL-GroES system forms a nano-cage that allows encapsulation of the non-native substrate proteins and provides a physical environment optimized to promote and accelerate protein folding. The chain is Chaperonin GroEL from Allorhizobium ampelinum (strain ATCC BAA-846 / DSM 112012 / S4) (Agrobacterium vitis (strain S4)).